Here is a 125-residue protein sequence, read N- to C-terminus: MADLAKIVEDLSSLTVLEAAELSKLLEEKWGVSAAAPVAVAAAGGAAAAAPVEEEKTEFDVILTEAGANKINVIKEVRAITGLGLKEAKDLVEGAPKAVKEAVSKAEAADLKKKLEDAGAKVDVK.

The protein belongs to the bacterial ribosomal protein bL12 family. As to quaternary structure, homodimer. Part of the ribosomal stalk of the 50S ribosomal subunit. Forms a multimeric L10(L12)X complex, where L10 forms an elongated spine to which 2 to 4 L12 dimers bind in a sequential fashion. Binds GTP-bound translation factors.

Forms part of the ribosomal stalk which helps the ribosome interact with GTP-bound translation factors. Is thus essential for accurate translation. This chain is Large ribosomal subunit protein bL12, found in Sinorhizobium medicae (strain WSM419) (Ensifer medicae).